The chain runs to 100 residues: NADH-quinone oxidoreductase subunit K (100 aa).

The next 3 membrane-spanning stretches (helical) occupy residues 2 to 22 (ITLTHYLILSAILFSIALVGI), 29 to 49 (LMLFFATEIALNAVNIALAAF), and 63 to 83 (FFIIAIAASEVAVGLGLLIIW).

This sequence belongs to the complex I subunit 4L family. As to quaternary structure, NDH-1 is composed of 14 different subunits. Subunits NuoA, H, J, K, L, M, N constitute the membrane sector of the complex.

The protein localises to the cell inner membrane. The catalysed reaction is a quinone + NADH + 5 H(+)(in) = a quinol + NAD(+) + 4 H(+)(out). NDH-1 shuttles electrons from NADH, via FMN and iron-sulfur (Fe-S) centers, to quinones in the respiratory chain. The immediate electron acceptor for the enzyme in this species is believed to be ubiquinone. Couples the redox reaction to proton translocation (for every two electrons transferred, four hydrogen ions are translocated across the cytoplasmic membrane), and thus conserves the redox energy in a proton gradient. The sequence is that of NADH-quinone oxidoreductase subunit K from Nitratiruptor sp. (strain SB155-2).